Consider the following 294-residue polypeptide: Pyridoxal 5'-phosphate synthase subunit PdxS (294 aa).

Asp24 contributes to the D-ribose 5-phosphate binding site. The active-site Schiff-base intermediate with D-ribose 5-phosphate is Lys81. Gly153 lines the D-ribose 5-phosphate pocket. A D-glyceraldehyde 3-phosphate-binding site is contributed by Arg165. D-ribose 5-phosphate is bound by residues Gly214 and 235 to 236 (GS).

This sequence belongs to the PdxS/SNZ family. In terms of assembly, in the presence of PdxT, forms a dodecamer of heterodimers.

It catalyses the reaction aldehydo-D-ribose 5-phosphate + D-glyceraldehyde 3-phosphate + L-glutamine = pyridoxal 5'-phosphate + L-glutamate + phosphate + 3 H2O + H(+). It functions in the pathway cofactor biosynthesis; pyridoxal 5'-phosphate biosynthesis. Its function is as follows. Catalyzes the formation of pyridoxal 5'-phosphate from ribose 5-phosphate (RBP), glyceraldehyde 3-phosphate (G3P) and ammonia. The ammonia is provided by the PdxT subunit. Can also use ribulose 5-phosphate and dihydroxyacetone phosphate as substrates, resulting from enzyme-catalyzed isomerization of RBP and G3P, respectively. This chain is Pyridoxal 5'-phosphate synthase subunit PdxS, found in Bacillus pumilus (strain SAFR-032).